Consider the following 369-residue polypeptide: Glycine oxidase (369 aa).

FAD-binding positions include 14–15, 34–35, 42–43, 47–49, and valine 174; these read II, ES, TT, and AGM. The substrate site is built by arginine 302 and arginine 329. 327–333 is an FAD binding site; that stretch reads HFRNGIL.

The protein belongs to the DAO family. ThiO subfamily. As to quaternary structure, homotetramer. It depends on FAD as a cofactor.

It localises to the cytoplasm. It carries out the reaction glycine + O2 + H2O = glyoxylate + H2O2 + NH4(+). The catalysed reaction is N-ethylglycine + O2 + H2O = ethylamine + glyoxylate + H2O2. The enzyme catalyses sarcosine + O2 + H2O = methylamine + glyoxylate + H2O2. It catalyses the reaction D-alanine + O2 + H2O = pyruvate + H2O2 + NH4(+). It carries out the reaction glyphosate + O2 + H2O = aminomethylphosphonate + glyoxylate + H2O2 + H(+). Its pathway is cofactor biosynthesis; thiamine diphosphate biosynthesis. With respect to regulation, is competitively inhibited by glycolate. Its function is as follows. Catalyzes the FAD-dependent oxidative deamination of various amines and D-amino acids to yield the corresponding alpha-keto acids, ammonia/amine, and hydrogen peroxide. Oxidizes sarcosine (N-methylglycine), N-ethylglycine and glycine. Can also oxidize the herbicide glyphosate (N-phosphonomethylglycine). Displays lower activities on D-alanine, D-valine, D-proline and D-methionine. Does not act on L-amino acids and other D-amino acids. Is essential for thiamine biosynthesis since the oxidation of glycine catalyzed by ThiO generates the glycine imine intermediate (dehydroglycine) required for the biosynthesis of the thiazole ring of thiamine pyrophosphate. This Bacillus subtilis (strain 168) protein is Glycine oxidase.